The primary structure comprises 312 residues: Plasminogen activator (312 aa).

The signal sequence occupies residues 1–20 (MKKSSIVATIITILSGSANA). Residues 21-31 (ASSQLIPNISP) are Periplasmic-facing. The beta stranded transmembrane segment at 32 to 40 (DSFTVAAST) threads the bilayer. At 41–70 (GMLSGKSHEMLYDAETGRKISQLDWKIKNV) the chain is on the extracellular side. A beta stranded transmembrane segment spans residues 71 to 80 (AILKGDISWD). At 81–84 (PYSF) the chain is on the periplasmic side. Residues 85–94 (LTLNARGWTS) traverse the membrane as a beta stranded segment. The Extracellular segment spans residues 95-131 (LASGSGNMDDYDWMNENQSEWTDHSSHPATNVNHANE). Active-site residues include aspartate 104 and aspartate 106. The chain crosses the membrane as a beta stranded span at residues 132 to 140 (YDLNVKGWL). Over 141-145 (LQDEN) the chain is Periplasmic. A beta stranded membrane pass occupies residues 146-154 (YKAGITAGY). The Extracellular segment spans residues 155–194 (QETRFSWTATGGSYSYNNGAYTGNFPKGVRVIGYNQRFSM). A beta stranded membrane pass occupies residues 195 to 204 (PYIGLAGQYR). The Periplasmic portion of the chain corresponds to 205-207 (IND). The chain crosses the membrane as a beta stranded span at residues 208–216 (FELNALFKF). The Extracellular portion of the chain corresponds to 217 to 244 (SDWVRAHDNDEHYMRDLTFREKTSGSRY). Active-site residues include aspartate 226 and histidine 228. A beta stranded transmembrane segment spans residues 245–255 (YGTVINAGYYV). Over 256-258 (TPN) the chain is Periplasmic. A beta stranded transmembrane segment spans residues 259-267 (AKVFAEFTY). The Extracellular segment spans residues 268–301 (SKYDEGKGGTQTIDKNSGDSVSIGGDAAGISNKN). The beta stranded transmembrane segment at 302 to 312 (YTVTAGLQYRF) threads the bilayer.

Belongs to the peptidase A26 family.

The protein resides in the cell outer membrane. The enzyme catalyses Converts human Glu-plasminogen to plasmin by cleaving the 560-Arg-|-Val-561 peptide bond that is also hydrolyzed by the mammalian u-plasminogen activator and t-plasminogen activator. Also cleaves arginyl bonds in other proteins.. Its activity is regulated as follows. Requires bacterial lipopolysaccharide (LPS) for activation; addition of LPS to inactive protein reactivates it. In the absence of LPS the active site groove is slightly narrower, and peptide substrate binds deep within the active site groove, displacing the nucleophilic water molecule. Its function is as follows. In the mammalian host activates (cleaves) plasminogen to generate the serine protease plasmin. Plasmin degrades fibrin clots (fibrinolysis) and facilitates bacterial cell migration, enabling rapid dissemination of bacteria from the initial site of infection. Cleaves host plasminogen to generate plasmin and probably also has autocatalytic activity. Fibrinolytic activity prevails at 37 degrees Celsius whereas coagulase expression predominates at lower temperatures (28 degrees Celsius). Cleaves plasminogen; plasminogen cleavage is much higher than coagulase activity. In Yersinia pestis, this protein is Plasminogen activator.